An 87-amino-acid polypeptide reads, in one-letter code: Prohibitin 1 (87 aa).

Position 8 is a phosphothreonine (T8). K62 carries the N6-acetyllysine modification. Y83 carries the phosphotyrosine modification.

Belongs to the prohibitin family. The mitochondrial prohibitin complex consists of two subunits (PHB1 and PHB2), assembled into a membrane-associated ring-shaped supercomplex of approximately 1 mDa. Interacts with STOML2. Interacts with MAP1LC3B (membrane-bound form LC3-II); the interaction requires PHB2 and takes place upon Parkin-mediated mitochondrial damage. Interacts with STAT3 (unphosphorylated or phosphorylated at 'Ser-727'). Interacts with CLPB. Interacts with CD86 (via cytoplasmic domain); the interactions increases after priming with CD40.

The protein resides in the mitochondrion inner membrane. The protein localises to the nucleus. It is found in the cytoplasm. It localises to the cell membrane. Protein with pleiotropic attributes mediated in a cell-compartment- and tissue-specific manner, which include the plasma membrane-associated cell signaling functions, mitochondrial chaperone, and transcriptional co-regulator of transcription factors in the nucleus. Plays a role in adipose tissue and glucose homeostasis in a sex-specific manner. Contributes to pulmonary vascular remodeling by accelerating proliferation of pulmonary arterial smooth muscle cells. In terms of biological role, in the mitochondria, together with PHB2, forms large ring complexes (prohibitin complexes) in the inner mitochondrial membrane (IMM) and functions as a chaperone protein that stabilizes mitochondrial respiratory enzymes and maintains mitochondrial integrity in the IMM, which is required for mitochondrial morphogenesis, neuronal survival, and normal lifespan. The prohibitin complex, with DNAJC19, regulates cardiolipin remodeling and the protein turnover of OMA1 in a cardiolipin-binding manner. Regulates mitochondrial respiration activity playing a role in cellular aging. The prohibitin complex plays a role of mitophagy receptor involved in targeting mitochondria for autophagic degradation. Involved in mitochondrial-mediated antiviral innate immunity, activates RIG-I-mediated signal transduction and production of IFNB1 and proinflammatory cytokine IL6. Its function is as follows. In the nucleus, acts as a transcription coregulator, enhances promoter binding by TP53, a transcription factor it activates, but reduces the promoter binding by E2F1, a transcription factor it represses. Interacts with STAT3 to affect IL17 secretion in T-helper Th17 cells. Functionally, in the plasma membrane, cooperates with CD86 to mediate CD86-signaling in B lymphocytes that regulates the level of IgG1 produced through the activation of distal signaling intermediates. Upon CD40 engagement, required to activate NF-kappa-B signaling pathway via phospholipase C and protein kinase C activation. The polypeptide is Prohibitin 1 (PHB1) (Mesocricetus auratus (Golden hamster)).